A 314-amino-acid polypeptide reads, in one-letter code: Malate dehydrogenase (314 aa).

NAD(+)-binding positions include 11-16 (GSGNIG) and Asp-35. Arg-84 and Arg-90 together coordinate substrate. NAD(+)-binding positions include Asn-97 and 120–122 (ITN). Substrate is bound by residues Asn-122 and Arg-153. His-177 acts as the Proton acceptor in catalysis.

This sequence belongs to the LDH/MDH superfamily. MDH type 3 family.

The enzyme catalyses (S)-malate + NAD(+) = oxaloacetate + NADH + H(+). Functionally, catalyzes the reversible oxidation of malate to oxaloacetate. The chain is Malate dehydrogenase from Rickettsia typhi (strain ATCC VR-144 / Wilmington).